A 594-amino-acid chain; its full sequence is Apolipoprotein N-acyltransferase (594 aa).

Residues 1 to 29 (MIPAVTDDDPLEDPLDDDVAPGLDDAEPE) are compositionally biased toward acidic residues. The segment at 1-48 (MIPAVTDDDPLEDPLDDDVAPGLDDAEPEPEPRDEHDEPSRPATGSRI) is disordered. At 1–67 (MIPAVTDDDP…RFGKGVLDRC (67 aa)) the chain is on the cytoplasmic side. A compositionally biased stretch (basic and acidic residues) spans 30-40 (PEPRDEHDEPS). Residues 68-87 (APLSAAIGGGLALWLSFPPI) traverse the membrane as a helical segment. Residues 88 to 116 (GWWFTAFPGLALLGWVLTRTATTKAGGFG) lie on the Extracellular side of the membrane. The chain crosses the membrane as a helical span at residues 117 to 134 (YGVLFGLAFYVPLLPWIS). At 135–138 (GLVG) the chain is on the cytoplasmic side. A helical transmembrane segment spans residues 139–160 (AVPWLALAFAESLFCGLFGLGA). Topologically, residues 161-221 (VVVVRLPGWP…IGGAPLVSFA (61 aa)) are extracellular. A helical transmembrane segment spans residues 222–239 (VALIGFSLTLLTAQIVWW). Over 240–251 (WRHGHKPGVPAP) the chain is Cytoplasmic. The chain crosses the membrane as a helical span at residues 252–269 (AVMLPGVAIAASLLVTAL). Residues 270 to 554 (VWPQVRQSGT…TDLTPATKWG (285 aa)) are Extracellular-facing. Residues 287–543 (VTVAAVQGNV…PAYLDNQIRL (257 aa)) form the CN hydrolase domain. The Proton acceptor role is filled by glutamate 340. Lysine 405 is an active-site residue. Cysteine 455 acts as the Nucleophile in catalysis. A helical membrane pass occupies residues 555 to 572 (PIVQAVLVIAGVAVLLIA). The Cytoplasmic segment spans residues 573–594 (ILHNGRFAPRMLRRRSATTVKR).

This sequence belongs to the CN hydrolase family. Apolipoprotein N-acyltransferase subfamily. In terms of assembly, interacts with Ppm1 (AC A0QZ12) upon coexpression in E.coli, which increases the PPM synthase activity of Ppm1.

It localises to the cell membrane. The catalysed reaction is N-terminal S-1,2-diacyl-sn-glyceryl-L-cysteinyl-[lipoprotein] + a glycerophospholipid = N-acyl-S-1,2-diacyl-sn-glyceryl-L-cysteinyl-[lipoprotein] + a 2-acyl-sn-glycero-3-phospholipid + H(+). Its pathway is protein modification; lipoprotein biosynthesis (N-acyl transfer). Functionally, catalyzes the phospholipid dependent N-acylation of the N-terminal cysteine of apolipoprotein, the last step in lipoprotein maturation. Can transfer a number of fatty acids (C16 and C19, palmitic and probably tuberculostearic acids respectively are shown). Enhances the polyprenol monophosphomannose (PPM) synthase activity of Ppm1 (AC A0QZ12) without itself having PPM synthase catalytic activity. The polypeptide is Apolipoprotein N-acyltransferase (Mycolicibacterium smegmatis (strain ATCC 700084 / mc(2)155) (Mycobacterium smegmatis)).